Consider the following 382-residue polypeptide: Beta-lactamase CMY-10 (382 aa).

The N-terminal stretch at 1 to 23 (MQQRQSILWGAVATLMWAGLAHA) is a signal peptide. Ser88 serves as the catalytic Acyl-ester intermediate. Ser88 is a binding site for AMP. Residues Ser88, Gln144, Tyr174, Thr336, Ser338, and Asn363 each contribute to the GMP site. Positions 88, 144, 174, 336, 338, and 363 each coordinate IMP. Tyr174 serves as a coordination point for AMP. Ser338 contacts AMP.

The protein belongs to the class-C beta-lactamase family. Monomer.

It carries out the reaction a beta-lactam + H2O = a substituted beta-amino acid. Inhibited by various nucleotides in vitro, including adenosine 5'-(P-acetyl)monophosphate (acAMP), inosine-5'-monophosphate (IMP) and guanosine-5'-monophosphate (GMP); IMP and GMP exhibit strongest competitive inhibition. Inhibited by the beta-lactamase-blocking agent, avibactam. Inhibited by clavulanic acid. Weakly inhibited by citric acid. Functionally, class C beta-lactamase which confers resistance to penicillins and cephalosporins. Has benzylpenicillin-, ceftazidime-, nitrocefin- and imipenem-hydrolyzing activity. This Klebsiella aerogenes (Enterobacter aerogenes) protein is Beta-lactamase CMY-10.